Reading from the N-terminus, the 116-residue chain is MAGRSGDSDEELLRTVRLIKLLYQSNPPPSPEGTRQARRNRRRRWRERQRQIRSISGWILSTYLGRSAEPVPLQLPPLERLTLDCSEDCGNSGAQGVGSPQILVESPAVLDSGTKE.

Ser-5 and Ser-8 each carry phosphoserine; by host CK2. Positions 18–26 (LIKLLYQSN) are homomultimerization. Positions 23–48 (YQSNPPPSPEGTRQARRNRRRRWRER) are disordered. Residues 34–50 (TRQARRNRRRRWRERQR) carry the Nuclear localization signal and RNA-binding (RRE) motif. Residues 36-47 (QARRNRRRRWRE) are compositionally biased toward basic residues. The Nuclear export signal and binding to XPO1 signature appears at 73–84 (LQLPPLERLTLD). The interval 90–116 (GNSGAQGVGSPQILVESPAVLDSGTKE) is disordered. 2 positions are modified to phosphoserine; by host: Ser-92 and Ser-99.

This sequence belongs to the HIV-1 REV protein family. In terms of assembly, homomultimer; when bound to the RRE. Multimeric assembly is essential for activity and may involve XPO1. Binds to human KPNB1, XPO1, TNPO1, RANBP5 and IPO7. Interacts with the viral Integrase. Interacts with human KHDRBS1. Interacts with human NAP1; this interaction decreases Rev multimerization and stimulates its activity. Interacts with human DEAD-box helicases DDX3 and DDX24; these interactions may serve for viral RNA export to the cytoplasm and packaging, respectively. Interacts with human PSIP1; this interaction may inhibit HIV-1 DNA integration by promoting dissociation of the Integrase-LEDGF/p75 complex. Post-translationally, asymmetrically arginine dimethylated at one site by host PRMT6. Methylation impairs the RNA-binding activity and export of viral RNA from the nucleus to the cytoplasm. Phosphorylated by protein kinase CK2. Presence of, and maybe binding to the N-terminus of the regulatory beta subunit of CK2 is necessary for CK2-mediated Rev's phosphorylation.

It is found in the host nucleus. It localises to the host nucleolus. Its subcellular location is the host cytoplasm. In terms of biological role, escorts unspliced or incompletely spliced viral pre-mRNAs (late transcripts) out of the nucleus of infected cells. These pre-mRNAs carry a recognition sequence called Rev responsive element (RRE) located in the env gene, that is not present in fully spliced viral mRNAs (early transcripts). This function is essential since most viral proteins are translated from unspliced or partially spliced pre-mRNAs which cannot exit the nucleus by the pathway used by fully processed cellular mRNAs. Rev itself is translated from a fully spliced mRNA that readily exits the nucleus. Rev's nuclear localization signal (NLS) binds directly to KPNB1/Importin beta-1 without previous binding to KPNA1/Importin alpha-1. KPNB1 binds to the GDP bound form of RAN (Ran-GDP) and targets Rev to the nucleus. In the nucleus, the conversion from Ran-GDP to Ran-GTP dissociates Rev from KPNB1 and allows Rev's binding to the RRE in viral pre-mRNAs. Rev multimerization on the RRE via cooperative assembly exposes its nuclear export signal (NES) to the surface. Rev can then form a complex with XPO1/CRM1 and Ran-GTP, leading to nuclear export of the complex. Conversion from Ran-GTP to Ran-GDP mediates dissociation of the Rev/RRE/XPO1/RAN complex, so that Rev can return to the nucleus for a subsequent round of export. Beside KPNB1, also seems to interact with TNPO1/Transportin-1, RANBP5/IPO5 and IPO7/RANBP7 for nuclear import. The nucleoporin-like HRB/RIP is an essential cofactor that probably indirectly interacts with Rev to release HIV RNAs from the perinuclear region to the cytoplasm. This chain is Protein Rev, found in Homo sapiens (Human).